Here is a 632-residue protein sequence, read N- to C-terminus: tRNA uridine 5-carboxymethylaminomethyl modification enzyme MnmG (632 aa).

FAD is bound by residues 15-20 (GAGHAG), Ile127, and Ser182. Residue 276–290 (GPRYCPSIEDKIVRF) coordinates NAD(+). Gln373 contacts FAD.

It belongs to the MnmG family. In terms of assembly, homodimer. Heterotetramer of two MnmE and two MnmG subunits. FAD serves as cofactor.

The protein localises to the cytoplasm. Its function is as follows. NAD-binding protein involved in the addition of a carboxymethylaminomethyl (cmnm) group at the wobble position (U34) of certain tRNAs, forming tRNA-cmnm(5)s(2)U34. The chain is tRNA uridine 5-carboxymethylaminomethyl modification enzyme MnmG from Streptococcus pyogenes serotype M1.